A 766-amino-acid chain; its full sequence is UPF0313 protein PP_4872 (766 aa).

The Radical SAM core domain maps to 371 to 649 (AYEMIRFSVN…KAFLRYHDPK (279 aa)). Positions 385, 389, and 392 each coordinate [4Fe-4S] cluster. The disordered stretch occupies residues 670–766 (GKHQLIPLHQ…KKPRQPVIPR (97 aa)). Over residues 723 to 735 (KPWDKREKAKAEA) the composition is skewed to basic and acidic residues.

The protein belongs to the UPF0313 family. Requires [4Fe-4S] cluster as cofactor.

In Pseudomonas putida (strain ATCC 47054 / DSM 6125 / CFBP 8728 / NCIMB 11950 / KT2440), this protein is UPF0313 protein PP_4872.